The primary structure comprises 216 residues: Putative ripening-related protein 4 (216 aa).

The N-terminal stretch at 1 to 25 (MAANVKVLVVLALLQLMSLHAVVHG) is a signal peptide.

This sequence belongs to the kiwellin family.

The protein resides in the secreted. In Oryza sativa subsp. japonica (Rice), this protein is Putative ripening-related protein 4.